The primary structure comprises 234 residues: Ammonia monooxygenase gamma subunit (234 aa).

Residues 1–20 form the signal peptide; the sequence is MRMIKFLLLAILLAPFVAHS. The Cytochrome c domain maps to 38–193; sequence ESLQRGAKGF…RFVADLVNYM (156 aa). Residues Cys-51, Cys-54, and His-55 each coordinate heme c. Residues 206–226 form a helical membrane-spanning segment; it reads ELGITVLLFLFGMLGLTYLLK.

This sequence belongs to the cytochrome c family. As to quaternary structure, the soluble ammonia monooxygenase is a nonamer composed of three alpha subunits (AmoA), three beta subunits (AmoB) and three gamma subunits (Cytochrome c1 PetC). Heme c serves as cofactor.

It is found in the cell membrane. The protein resides in the cytoplasm. In terms of biological role, part of the ammonia monooxygenase complex, which catalyzes the oxidation of ammonia to hydroxylamine, the first reaction in the process of ammonia oxidation to nitrite. This Nitrosomonas europaea (strain ATCC 19718 / CIP 103999 / KCTC 2705 / NBRC 14298) protein is Ammonia monooxygenase gamma subunit.